A 425-amino-acid chain; its full sequence is Enolase (425 aa).

Position 162 (glutamine 162) interacts with (2R)-2-phosphoglycerate. Catalysis depends on glutamate 204, which acts as the Proton donor. Residues aspartate 241, glutamate 282, and aspartate 309 each contribute to the Mg(2+) site. (2R)-2-phosphoglycerate is bound by residues lysine 334, arginine 363, serine 364, and lysine 385. Lysine 334 acts as the Proton acceptor in catalysis.

It belongs to the enolase family. The cofactor is Mg(2+).

It is found in the cytoplasm. The protein localises to the secreted. The protein resides in the cell surface. The catalysed reaction is (2R)-2-phosphoglycerate = phosphoenolpyruvate + H2O. It participates in carbohydrate degradation; glycolysis; pyruvate from D-glyceraldehyde 3-phosphate: step 4/5. Catalyzes the reversible conversion of 2-phosphoglycerate (2-PG) into phosphoenolpyruvate (PEP). It is essential for the degradation of carbohydrates via glycolysis. The chain is Enolase from Corynebacterium jeikeium (strain K411).